Consider the following 607-residue polypeptide: CRISPR-associated DNA-binding protein Cas12m (607 aa).

A wedge domain (WED-N) region spans residues 1-16; sequence MTRVTVQTAGVHYKWQ. Residues 17 to 189 are recognition domain (REC); the sequence is MPDQLTQQLR…QLRHHRWDGT (173 aa). The segment at 50 to 124 is roof in REC; sequence WSSYPAVAAL…IASVRDEATE (75 aa). Residues 74 to 83 show a composition bias toward basic and acidic residues; sequence ASTVKEEKSR. The disordered stretch occupies residues 74–94; it reads ASTVKEEKSRQRTKRPSHPAV. The interval 190–315 is wedge domain (WED-C); that stretch reads GTISVQLQRQ…KIPDQGEVDE (126 aa). The interval 316-559 is ruvC-I; it reads GPTIAVHLGW…TVSHTGLSRV (244 aa). Residues 391–452 are ruvC insertion; sequence SIRDTLVAWL…EGADIAETLE (62 aa). The interval 552 to 588 is target nucleic-acid binding (TNB); that stretch reads SHTGLSRVHAACGHENPADDRYLMQPVLCDGCGRTYD. Zn(2+)-binding residues include H560, C563, C580, and C583. The tract at residues 589-607 is ruvC-II; that stretch reads TDLSATILMLQRASAATSN. D590 is a binding site for Mg(2+).

The protein belongs to the CRISPR-associated DNA-binding protein Cas12m family. As to quaternary structure, binds crRNA and target dsDNA as a monomer. Mg(2+) serves as cofactor. The cofactor is Zn(2+).

CRISPR (clustered regularly interspaced short palindromic repeat), is an adaptive immune system that provides protection against mobile genetic elements (viruses, transposable elements and conjugative plasmids). CRISPR clusters contain sequences complementary to antecedent mobile elements and target invading nucleic acids. CRISPR clusters are transcribed and processed into CRISPR RNA (crRNA). Recognizes a short motif in the CRISPR repeat sequences (the 5' PAM or protospacer adjacent motif, 5'-TTN-3' in this organism) to help distinguish self versus nonself, as targets within the bacterial CRISPR locus do not have PAMs. Upon expression in E.coli as a CRISPR locus inhibits plasmid propagation when targeted to regions essential for plasmid propagation (replication origin and a selectable marker); inhibits expression of a non-selectable marker, probably at the transcriptional level. Protects E.coli against bacteriophage M13mp18, to a lesser extent against lambda and VpaE1 as well as phage T4 with hydroxymethyl or unmodified (but not glycosylated) cytosines. Preferentially binds to its associated crRNA. Cas12m-crRNA binds DNA in a PAM-dependent, crRNA-guided fashion. Binds a 20-bp crRNA-ss-target DNA heteroduplex, in a 52 nucleotide crRNA. No dsDNA, ssDNA or RNA nuclease activity is seen for the crRNA-Cas12m complex. Probably required for pre-crRNA processing to mature crRNA. This is CRISPR-associated DNA-binding protein Cas12m from Gordonia otitidis (strain DSM 44809 / CCUG 52243 / JCM 12355 / NBRC 100426 / IFM 10032).